A 475-amino-acid chain; its full sequence is Ankyrin repeat, SAM and basic leucine zipper domain-containing protein 1 (475 aa).

A phosphoserine mark is found at serine 17, serine 18, and serine 20. ANK repeat units lie at residues 45-74 (EKNE…SVDT), 78-107 (YGWT…NASF), 110-144 (DKQT…DPNM), 148-177 (RLMT…DVNA), 181-210 (NGYT…NKMI), and 214-243 (DGKT…PLEG). The region spanning 272 to 334 (SYTAFGDLEI…KILAALKELE (63 aa)) is the SAM domain.

In terms of assembly, interacts with DDX4, PIWIL1, RANBP9 and TDRD1.

The protein resides in the cytoplasm. Its function is as follows. Plays a central role during spermatogenesis by repressing transposable elements and preventing their mobilization, which is essential for the germline integrity. Acts via the piRNA metabolic process, which mediates the repression of transposable elements during meiosis by forming complexes composed of piRNAs and Piwi proteins and governs the methylation and subsequent repression of transposons. Its association with pi-bodies suggests a participation in the primary piRNAs metabolic process. Required prior to the pachytene stage to facilitate the production of multiple types of piRNAs, including those associated with repeats involved in the regulation of retrotransposons. May act by mediating protein-protein interactions during germ cell maturation. In Atelerix albiventris (Middle-African hedgehog), this protein is Ankyrin repeat, SAM and basic leucine zipper domain-containing protein 1 (ASZ1).